A 95-amino-acid chain; its full sequence is Small ribosomal subunit protein bS18 (95 aa).

Belongs to the bacterial ribosomal protein bS18 family. In terms of assembly, part of the 30S ribosomal subunit. Forms a tight heterodimer with protein bS6.

Binds as a heterodimer with protein bS6 to the central domain of the 16S rRNA, where it helps stabilize the platform of the 30S subunit. The chain is Small ribosomal subunit protein bS18 from Rickettsia canadensis (strain McKiel).